The primary structure comprises 327 residues: GTPase Obg (327 aa).

The Obg domain occupies Met1–Leu159. The region spanning Ala160–Ile327 is the OBG-type G domain. ATP is bound by residues Gly166 to Ser173, Phe191 to Ile195, Asp213 to Gly216, Asn280 to Glu283, and Ser309 to Ser311. Residues Ser173 and Thr193 each coordinate Mg(2+).

It belongs to the TRAFAC class OBG-HflX-like GTPase superfamily. OBG GTPase family. In terms of assembly, monomer. Requires Mg(2+) as cofactor.

Its subcellular location is the cytoplasm. Its function is as follows. An essential GTPase which binds GTP, GDP and possibly (p)ppGpp with moderate affinity, with high nucleotide exchange rates and a fairly low GTP hydrolysis rate. Plays a role in control of the cell cycle, stress response, ribosome biogenesis and in those bacteria that undergo differentiation, in morphogenesis control. This Prochlorococcus marinus (strain MIT 9312) protein is GTPase Obg.